Reading from the N-terminus, the 451-residue chain is NADP-specific glutamate dehydrogenase (451 aa).

The active site involves K114.

Belongs to the Glu/Leu/Phe/Val dehydrogenases family. Homohexamer.

The catalysed reaction is L-glutamate + NADP(+) + H2O = 2-oxoglutarate + NH4(+) + NADPH + H(+). The polypeptide is NADP-specific glutamate dehydrogenase (GDH2) (Fusarium fujikuroi (Bakanae and foot rot disease fungus)).